Consider the following 131-residue polypeptide: Large ribosomal subunit protein bL19 (131 aa).

Residues 111–124 (RIAERAERGSEKGK) show a composition bias toward basic and acidic residues. The segment at 111-131 (RIAERAERGSEKGKTTPAAAE) is disordered.

The protein belongs to the bacterial ribosomal protein bL19 family.

Its function is as follows. This protein is located at the 30S-50S ribosomal subunit interface and may play a role in the structure and function of the aminoacyl-tRNA binding site. The chain is Large ribosomal subunit protein bL19 from Methylobacterium nodulans (strain LMG 21967 / CNCM I-2342 / ORS 2060).